The following is a 664-amino-acid chain: DNA ligase (664 aa).

NAD(+) contacts are provided by residues D31–D35, S80–L81, and E110. Residue K112 is the N6-AMP-lysine intermediate of the active site. Residues R133, E167, K282, and K306 each coordinate NAD(+). Zn(2+)-binding residues include C400, C403, C418, and C423. The BRCT domain maps to Q583 to G664.

This sequence belongs to the NAD-dependent DNA ligase family. LigA subfamily. Mg(2+) serves as cofactor. It depends on Mn(2+) as a cofactor.

The catalysed reaction is NAD(+) + (deoxyribonucleotide)n-3'-hydroxyl + 5'-phospho-(deoxyribonucleotide)m = (deoxyribonucleotide)n+m + AMP + beta-nicotinamide D-nucleotide.. Functionally, DNA ligase that catalyzes the formation of phosphodiester linkages between 5'-phosphoryl and 3'-hydroxyl groups in double-stranded DNA using NAD as a coenzyme and as the energy source for the reaction. It is essential for DNA replication and repair of damaged DNA. The protein is DNA ligase of Exiguobacterium sibiricum (strain DSM 17290 / CCUG 55495 / CIP 109462 / JCM 13490 / 255-15).